Consider the following 97-residue polypeptide: U6-theraphotoxin-Hhn1a 4 (97 aa).

An N-terminal signal peptide occupies residues 1–33 (MLIKQFSRRSKNMKVQILLAFAALFVLAVGSYA). Positions 34–61 (SESKKLDLRDALLSAMFSADYQLNPQER) are excised as a propeptide. 3 disulfide bridges follow: Cys-63–Cys-77, Cys-70–Cys-82, and Cys-76–Cys-89.

Belongs to the neurotoxin 10 (Hwtx-1) family. 12 (Hntx-12) subfamily. Expressed by the venom gland.

It is found in the secreted. Ion channel inhibitor. In Cyriopagopus hainanus (Chinese bird spider), this protein is U6-theraphotoxin-Hhn1a 4.